The sequence spans 616 residues: Chaperone protein HscA (616 aa).

It belongs to the heat shock protein 70 family.

In terms of biological role, chaperone involved in the maturation of iron-sulfur cluster-containing proteins. Has a low intrinsic ATPase activity which is markedly stimulated by HscB. Involved in the maturation of IscU. This chain is Chaperone protein HscA, found in Yersinia enterocolitica serotype O:8 / biotype 1B (strain NCTC 13174 / 8081).